The primary structure comprises 348 residues: NADH-quinone oxidoreductase subunit H (348 aa).

The next 9 helical transmembrane spans lie at 13 to 33, 50 to 70, 82 to 102, 115 to 135, 161 to 181, 198 to 218, 258 to 278, 285 to 305, and 321 to 341; these read LIMV…IAFL, PNVV…KFIL, AVFL…YAVI, VGIL…IMGG, IGLV…TDIV, FLDW…ISGL, AIVL…LPIV, WVPG…MIAL, and LGWK…AFVL.

This sequence belongs to the complex I subunit 1 family. NDH-1 is composed of 14 different subunits. Subunits NuoA, H, J, K, L, M, N constitute the membrane sector of the complex.

It localises to the cell inner membrane. The catalysed reaction is a quinone + NADH + 5 H(+)(in) = a quinol + NAD(+) + 4 H(+)(out). NDH-1 shuttles electrons from NADH, via FMN and iron-sulfur (Fe-S) centers, to quinones in the respiratory chain. The immediate electron acceptor for the enzyme in this species is believed to be ubiquinone. Couples the redox reaction to proton translocation (for every two electrons transferred, four hydrogen ions are translocated across the cytoplasmic membrane), and thus conserves the redox energy in a proton gradient. This subunit may bind ubiquinone. The protein is NADH-quinone oxidoreductase subunit H of Agrobacterium fabrum (strain C58 / ATCC 33970) (Agrobacterium tumefaciens (strain C58)).